Reading from the N-terminus, the 373-residue chain is MNPAEHDEAVSQFCAMTRARPDEAQEYLATNGWDLEAAVTEFFAEQDETAGSSEPTGQPSAKSSSSTPRESSSSRKQPPKKFATLGDLASGAADSSDDDDDENQDFFAGGEKSGLAVQNPDDLKKKIIEKARRTQLPASDDSEPRRNYFTGPARTLGGEDTPSRVIDTPSGPAQPQIPRRVRRTLHFWADGFSVDDGELYRSDDPQNAEILNSIRQGRAPLSIMNAQHGQDVDVEIKQHDEKYVRPKPKYQPFAGKGQRLGSPTPGIRAPAPSEPAPAPQSSSGPPKPNVDESQPVVTLQIRLGDGTRLTSRFNTTHTIGDVYDFVSAASPQSQARPWVLLTTFPSKELTDKAAVLGDLPEFKRGGVVVQKWQ.

2 disordered regions span residues 39 to 179 (VTEF…QIPR) and 236 to 293 (IKQH…VDES). Polar residues predominate over residues 49-59 (TAGSSEPTGQP). Composition is skewed to low complexity over residues 60–71 (SAKSSSSTPRES) and 85–94 (LGDLASGAAD). The segment covering 95–104 (SSDDDDDENQ) has biased composition (acidic residues). A compositionally biased stretch (basic and acidic residues) spans 121-132 (DDLKKKIIEKAR). The region spanning 185 to 258 (LHFWADGFSV…KYQPFAGKGQ (74 aa)) is the SEP domain. Positions 292–369 (ESQPVVTLQI…PEFKRGGVVV (78 aa)) constitute a UBX domain.

Functionally, involved in CDC48-dependent protein degradation through the ubiquitin/proteasome pathway. The sequence is that of UBX domain-containing protein 1 (ubx1) from Emericella nidulans (strain FGSC A4 / ATCC 38163 / CBS 112.46 / NRRL 194 / M139) (Aspergillus nidulans).